Consider the following 524-residue polypeptide: Cytochrome P450 52A6 (524 aa).

The chain crosses the membrane as a helical span at residues 17–34; that stretch reads WYTVITLAALVFLISSNI. A heme-binding site is contributed by Cys-472.

The protein belongs to the cytochrome P450 family. Requires heme as cofactor.

It is found in the membrane. Together with an NADPH cytochrome P450 the enzyme system catalyzes the terminal hydroxylation as the first step in the assimilation of alkanes and fatty acids. Preferentially hydroxylates hexadecane. In Candida tropicalis (Yeast), this protein is Cytochrome P450 52A6 (CYP52A6).